A 105-amino-acid chain; its full sequence is ATPase inhibitor A, mitochondrial (105 aa).

The disordered stretch occupies residues M17–A52. An N-terminal inhibitory region region spans residues L22–A51. Positions L25–S38 are enriched in gly residues. A coiled-coil region spans residues F58–D105. The antiparallel alpha-helical coiled coil region stretch occupies residues H73–D105.

Belongs to the ATPase inhibitor family. Homodimer; represents the active form and is present at a pH value below 6.5. Homotetramer; represents the inactive form and is present at a pH value above 7.0.

It is found in the mitochondrion. Its function is as follows. Endogenous F(1)F(o)-ATPase inhibitor limiting ATP depletion when the mitochondrial membrane potential falls below a threshold and the F(1)F(o)-ATP synthase starts hydrolyzing ATP to pump protons out of the mitochondrial matrix. Required to avoid the consumption of cellular ATP when the F(1)F(o)-ATP synthase enzyme acts as an ATP hydrolase. Indirectly acts as a regulator of heme synthesis in erythroid tissues: regulates heme synthesis by modulating the mitochondrial pH and redox potential, allowing fech to efficiently catalyze the incorporation of iron into protoporphyrin IX to produce heme. The chain is ATPase inhibitor A, mitochondrial from Danio rerio (Zebrafish).